A 67-amino-acid chain; its full sequence is Conotoxin TsMMSK-B022 (67 aa).

Positions 1-22 (MMSKLGVLLTICLLLFPLTAVS) are cleaved as a signal peptide. The propeptide occupies 23–50 (LDGDQPADLPELRAQDFAPERSPWFDPV). Intrachain disulfides connect cysteine 53-cysteine 65, cysteine 54-cysteine 61, and cysteine 58-cysteine 64. Proline 63 carries the post-translational modification 4-hydroxyproline.

This sequence belongs to the conotoxin M superfamily. In terms of tissue distribution, expressed by the venom duct.

It is found in the secreted. This chain is Conotoxin TsMMSK-B022, found in Conus tessulatus (Tessellate cone).